The sequence spans 321 residues: Probable protein phosphatase 2C 44 (321 aa).

Disordered stretches follow at residues 1-36 (MVGRMERQSASSSASCSPSSSAAGTSSSSSACGGKK) and 51-70 (NSSSTDTGKGRSKQSSNKVT). The span at 9–31 (SASSSASCSPSSSAAGTSSSSSA) shows a compositional bias: low complexity. The segment covering 51-69 (NSSSTDTGKGRSKQSSNKV) has biased composition (polar residues). One can recognise a PPM-type phosphatase domain in the interval 70–319 (THGFHLVEGK…DDISCIVIRF (250 aa)). Positions 107, 108, 271, and 310 each coordinate Mn(2+).

It belongs to the PP2C family. It depends on Mg(2+) as a cofactor. Mn(2+) is required as a cofactor.

The catalysed reaction is O-phospho-L-seryl-[protein] + H2O = L-seryl-[protein] + phosphate. It carries out the reaction O-phospho-L-threonyl-[protein] + H2O = L-threonyl-[protein] + phosphate. The polypeptide is Probable protein phosphatase 2C 44 (Oryza sativa subsp. japonica (Rice)).